The sequence spans 393 residues: NAD(P)H-quinone oxidoreductase subunit H, chloroplastic (393 aa).

Belongs to the complex I 49 kDa subunit family. In terms of assembly, NDH is composed of at least 16 different subunits, 5 of which are encoded in the nucleus.

It is found in the plastid. The protein resides in the chloroplast thylakoid membrane. The catalysed reaction is a plastoquinone + NADH + (n+1) H(+)(in) = a plastoquinol + NAD(+) + n H(+)(out). The enzyme catalyses a plastoquinone + NADPH + (n+1) H(+)(in) = a plastoquinol + NADP(+) + n H(+)(out). Its function is as follows. NDH shuttles electrons from NAD(P)H:plastoquinone, via FMN and iron-sulfur (Fe-S) centers, to quinones in the photosynthetic chain and possibly in a chloroplast respiratory chain. The immediate electron acceptor for the enzyme in this species is believed to be plastoquinone. Couples the redox reaction to proton translocation, and thus conserves the redox energy in a proton gradient. This Saccharum hybrid (Sugarcane) protein is NAD(P)H-quinone oxidoreductase subunit H, chloroplastic.